Here is a 1099-residue protein sequence, read N- to C-terminus: Sterol regulatory element-binding protein 2 (1099 aa).

Residues 1–47 (MDASEFMDTMDPSLSELGDEFTLGDIDEMLQFVSNQVDFPDIFEDQM) form a transcriptional activation (acidic) region. Residues 1–461 (MDASEFMDTM…SCVGVMDRSR (461 aa)) lie on the Cytoplasmic side of the membrane. The tract at residues 65–107 (LTPPHTPVQTSSQTHTQTLTQAHTQTHTQTHTQTRTPPVLQPR) is disordered. Positions 71–100 (PVQTSSQTHTQTLTQAHTQTHTQTHTQTRT) are enriched in low complexity. The region spanning 320–370 (ERRTTHNIIEKRYRSSINDKILELRDLVLGNDAKMHKSGVLRKAIDYIKYL) is the bHLH domain. The interval 370-391 (LQQVNHKLRQENLTLKMANQKN) is leucine-zipper. Residues 462 to 482 (LLLCALSFLCLSLNPLPSLLG) traverse the membrane as a helical segment. The Lumenal portion of the chain corresponds to 483-513 (AEAPAGSPEVAGHGPTRTLFSLPAQTQSFGA). Residues 514 to 534 (WLWCVLPFLLVWVVSGVGVVW) form a helical membrane-spanning segment. Residues 535–1099 (GCVRVLYLWE…LSGGTTIAAS (565 aa)) are Cytoplasmic-facing.

The protein belongs to the SREBP family. In terms of assembly, forms a tight complex with scap, the SCAP-SREBP complex, in the endoplasmic reticulum membrane. Homodimer; efficient DNA binding of the soluble transcription factor fragment requires dimerization with another bHLH protein. In terms of processing, processed in the Golgi apparatus, releasing the protein from the membrane. At low cholesterol the SCAP-SREBP complex is recruited into COPII vesicles for export from the endoplasmic reticulum. In the Golgi, complex SREBPs are cleaved sequentially by site-1 (mbtps1, S1P) and site-2 (mbtps2, S2P) protease. The first cleavage by site-1 protease occurs within the luminal loop, the second cleavage by site-2 protease occurs within the first transmembrane domain, releasing the transcription factor from the Golgi membrane.

The protein resides in the endoplasmic reticulum membrane. It is found in the golgi apparatus membrane. It localises to the cytoplasmic vesicle. The protein localises to the COPII-coated vesicle membrane. Its subcellular location is the nucleus. Precursor of the transcription factor form (Processed sterol regulatory element-binding protein 2), which is embedded in the endoplasmic reticulum membrane. Low sterol concentrations promote processing of this form, releasing the transcription factor form that translocates into the nucleus and activates transcription of genes involved in cholesterol biosynthesis. Its function is as follows. Key transcription factor that regulates expression of genes involved in cholesterol biosynthesis. Binds to the sterol regulatory element 1 (SRE-1) (5'-ATCACCCCAC-3'). Has dual sequence specificity binding to both an E-box motif (5'-ATCACGTGA-3') and to SRE-1 (5'-ATCACCCCAC-3'). Regulates transcription of genes related to cholesterol synthesis pathway. Activated by mediated cholesterol efflux, transactivates NOTCH and promotes hematopoietic stem and progenitor cell emergence. The chain is Sterol regulatory element-binding protein 2 from Danio rerio (Zebrafish).